We begin with the raw amino-acid sequence, 161 residues long: Large ribosomal subunit protein uL11 (161 aa).

The protein belongs to the universal ribosomal protein uL11 family. Part of the ribosomal stalk of the 50S ribosomal subunit. Interacts with L10 and the large rRNA to form the base of the stalk. L10 forms an elongated spine to which L12 dimers bind in a sequential fashion forming a multimeric L10(L12)X complex.

In terms of biological role, forms part of the ribosomal stalk which helps the ribosome interact with GTP-bound translation factors. This is Large ribosomal subunit protein uL11 from Methanosarcina acetivorans (strain ATCC 35395 / DSM 2834 / JCM 12185 / C2A).